The following is a 202-amino-acid chain: Venom allergen 5.02 (202 aa).

4 disulfide bridges follow: Cys-4-Cys-16, Cys-8-Cys-101, Cys-26-Cys-94, and Cys-168-Cys-185. The SCP domain maps to 46 to 187 (KQHNEFRQKV…WHRHYLVCNY (142 aa)).

It belongs to the CRISP family. Venom allergen 5-like subfamily. In terms of tissue distribution, expressed by the venom gland.

The protein resides in the secreted. The polypeptide is Venom allergen 5.02 (Vespa crabro (European hornet)).